The primary structure comprises 437 residues: tRNA wybutosine-synthesizing protein 2 homolog (437 aa).

S-adenosyl-L-methionine-binding positions include S208, K215, E255, and 283-284 (DN). Polar residues predominate over residues 331–344 (SFSGKNPQPPGSSN). The segment at 331–374 (SFSGKNPQPPGSSNMEKKHWPHPQKITTDKQGNRTTGSCMGEMS) is disordered.

It belongs to the class I-like SAM-binding methyltransferase superfamily. TRM5/TYW2 family.

The enzyme catalyses 4-demethylwyosine(37) in tRNA(Phe) + S-adenosyl-L-methionine = 4-demethyl-7-[(3S)-3-amino-3-carboxypropyl]wyosine(37) in tRNA(Phe) + S-methyl-5'-thioadenosine + H(+). It functions in the pathway tRNA modification; wybutosine-tRNA(Phe) biosynthesis. In terms of biological role, S-adenosyl-L-methionine-dependent transferase that acts as a component of the wybutosine biosynthesis pathway. Wybutosine is a hyper modified guanosine with a tricyclic base found at the 3'-position adjacent to the anticodon of eukaryotic phenylalanine tRNA. Catalyzes the transfer of the alpha-amino-alpha-carboxypropyl (acp) group from S-adenosyl-L-methionine to the C-7 position of 4-demethylwyosine (imG-14) to produce wybutosine-86. This is tRNA wybutosine-synthesizing protein 2 homolog (Trmt12) from Rattus norvegicus (Rat).